The chain runs to 459 residues: Bifunctional protein GlmU (459 aa).

The segment at 1–230 (MSNRFAVILA…FDETLGVNDR (230 aa)) is pyrophosphorylase. Residues 9–12 (LAAG), Lys-23, Gln-73, and 78–79 (GT) contribute to the UDP-N-acetyl-alpha-D-glucosamine site. Asp-103 provides a ligand contact to Mg(2+). Residues Gly-140, Glu-155, Asn-170, and Asn-228 each contribute to the UDP-N-acetyl-alpha-D-glucosamine site. Position 228 (Asn-228) interacts with Mg(2+). A linker region spans residues 231 to 251 (VALSQAEIIMKNRINRKNMVN). The tract at residues 252-459 (GVTIIDPSNT…VDQLLNKKKS (208 aa)) is N-acetyltransferase. Arg-333 and Lys-351 together coordinate UDP-N-acetyl-alpha-D-glucosamine. His-363 functions as the Proton acceptor in the catalytic mechanism. UDP-N-acetyl-alpha-D-glucosamine-binding residues include Tyr-366 and Asn-377. Residues 386–387 (NY), Ala-423, and Arg-440 contribute to the acetyl-CoA site.

In the N-terminal section; belongs to the N-acetylglucosamine-1-phosphate uridyltransferase family. The protein in the C-terminal section; belongs to the transferase hexapeptide repeat family. In terms of assembly, homotrimer. It depends on Mg(2+) as a cofactor.

Its subcellular location is the cytoplasm. It carries out the reaction alpha-D-glucosamine 1-phosphate + acetyl-CoA = N-acetyl-alpha-D-glucosamine 1-phosphate + CoA + H(+). It catalyses the reaction N-acetyl-alpha-D-glucosamine 1-phosphate + UTP + H(+) = UDP-N-acetyl-alpha-D-glucosamine + diphosphate. Its pathway is nucleotide-sugar biosynthesis; UDP-N-acetyl-alpha-D-glucosamine biosynthesis; N-acetyl-alpha-D-glucosamine 1-phosphate from alpha-D-glucosamine 6-phosphate (route II): step 2/2. The protein operates within nucleotide-sugar biosynthesis; UDP-N-acetyl-alpha-D-glucosamine biosynthesis; UDP-N-acetyl-alpha-D-glucosamine from N-acetyl-alpha-D-glucosamine 1-phosphate: step 1/1. It functions in the pathway bacterial outer membrane biogenesis; LPS lipid A biosynthesis. Its function is as follows. Catalyzes the last two sequential reactions in the de novo biosynthetic pathway for UDP-N-acetylglucosamine (UDP-GlcNAc). The C-terminal domain catalyzes the transfer of acetyl group from acetyl coenzyme A to glucosamine-1-phosphate (GlcN-1-P) to produce N-acetylglucosamine-1-phosphate (GlcNAc-1-P), which is converted into UDP-GlcNAc by the transfer of uridine 5-monophosphate (from uridine 5-triphosphate), a reaction catalyzed by the N-terminal domain. The protein is Bifunctional protein GlmU of Bacillus cereus (strain G9842).